The chain runs to 267 residues: Putative glycosyltransferase 63 (267 aa).

It belongs to the glycosyltransferase group 1 family. Glycosyltransferase 4 subfamily.

The polypeptide is Putative glycosyltransferase 63 (SIFV0063) (Sulfolobus islandicus filamentous virus (isolate Iceland/Hveragerdi) (SIFV)).